Here is a 475-residue protein sequence, read N- to C-terminus: Aspartyl/glutamyl-tRNA(Asn/Gln) amidotransferase subunit B (475 aa).

It belongs to the GatB/GatE family. GatB subfamily. In terms of assembly, heterotrimer of A, B and C subunits.

The catalysed reaction is L-glutamyl-tRNA(Gln) + L-glutamine + ATP + H2O = L-glutaminyl-tRNA(Gln) + L-glutamate + ADP + phosphate + H(+). It carries out the reaction L-aspartyl-tRNA(Asn) + L-glutamine + ATP + H2O = L-asparaginyl-tRNA(Asn) + L-glutamate + ADP + phosphate + 2 H(+). Functionally, allows the formation of correctly charged Asn-tRNA(Asn) or Gln-tRNA(Gln) through the transamidation of misacylated Asp-tRNA(Asn) or Glu-tRNA(Gln) in organisms which lack either or both of asparaginyl-tRNA or glutaminyl-tRNA synthetases. The reaction takes place in the presence of glutamine and ATP through an activated phospho-Asp-tRNA(Asn) or phospho-Glu-tRNA(Gln). This is Aspartyl/glutamyl-tRNA(Asn/Gln) amidotransferase subunit B from Thiobacillus denitrificans (strain ATCC 25259 / T1).